The following is a 1218-amino-acid chain: Probable RNA-dependent RNA polymerase SHL2 (1218 aa).

This sequence belongs to the RdRP family.

It catalyses the reaction RNA(n) + a ribonucleoside 5'-triphosphate = RNA(n+1) + diphosphate. Functionally, involved in the RNA silencing pathway. Probably required for the generation of small interfering RNAs (siRNAs). Regulates shoot apical meristem (SAM) initiation and maintenance and leaf polarization through the trans-acting siRNAS (ta-siRNAs) pathway which probably modulates the expression of the ARF2, ARF3, ARF4, ARF14 and ARF15 genes. The polypeptide is Probable RNA-dependent RNA polymerase SHL2 (SHL2) (Oryza sativa subsp. japonica (Rice)).